The sequence spans 623 residues: MELRDKVGQLPFSPGVYLYKDSGGKVIYVGKAKSLRNRVRSYFSEDKLGDIKTGTLITEACDIDYILVDNEKEALALENNLIKQYKPRFNILLRDDKTYPYVKVTNEKYPRVYVTRRLRKDGAQYFGPFFPANLAHRLVHFIHRHFQVPSCKVDLTRFHPKPCLQFHIHRCLGPCVQGLTTDEAYAAAVRDVRLFLDGRHSDLARGLRARMEAASLEMRFEEAAGLRDLITTVEEIEERQKMAAAKGDDVDIFAVYAEPPLVALNIFHLRNGQIVDRRELFWEDQFEYDESLFLSSLLKQIYLDQQFVPAEIHVPVEFEDLEALEELLTEKRQRRVEIRTPQRGQKKALLGLVETNAKHSFDARFRVLKPSSRAIQEALQDALNLPDAPSRIECFDISHIQGTDKVASMVVWEDGKMKKSDYRKFIIRTVVGNDDFASMREVVTRRYSRLQEEKQPMPGLVLIDGGLGQLHAAAEALEAIGIADQPLASIAKREEIIYVFGQEDEPVVLDRFSPILHLVQSIRDEAHRFAVTFHRSLRNTRQLTSELDAIRGVGAKTVQKLLKEFGSLERVRAATETQLATVVGRAAAKRVIAHYTTVEAAPEPVASVAQSEDAAPDVPDPQA.

In terms of domain architecture, GIY-YIG spans 12–91 (FSPGVYLYKD…IKQYKPRFNI (80 aa)). The 36-residue stretch at 201-236 (SDLARGLRARMEAASLEMRFEEAAGLRDLITTVEEI) folds into the UVR domain. The disordered stretch occupies residues 604–623 (PVASVAQSEDAAPDVPDPQA).

Belongs to the UvrC family. Interacts with UvrB in an incision complex.

The protein resides in the cytoplasm. The UvrABC repair system catalyzes the recognition and processing of DNA lesions. UvrC both incises the 5' and 3' sides of the lesion. The N-terminal half is responsible for the 3' incision and the C-terminal half is responsible for the 5' incision. The polypeptide is UvrABC system protein C (Solibacter usitatus (strain Ellin6076)).